Consider the following 644-residue polypeptide: Subversion of eukaryotic traffic protein A (644 aa).

The glucosyltransferase stretch occupies residues 1–400; the sequence is MYKIYSYLGW…FHTLLSQVSD (400 aa). The ptdIns(3)P-binding and localization domain stretch occupies residues 401–644; sequence PVNPTAHELK…EYDNNHGLRI (244 aa).

Post-translationally, ubiquitinated and polyubiquitinated when ectopically produced in both yeast and mammalian cells; however it is unsure if this modification occurs during the L.pneumophila infection of host cells.

It localises to the secreted. Secreted effector that interferes with vesicular trafficking of host cells. Possesses glucohydrolase and mono-O-glucosyltransferase activity by using UDP-glucose as a sugar donor substrate. Is able to glucosylate histones H4 and H3.1 in vitro, but it is unlikely that histones are the natural substrates for SetA. May glycosylate a component of the host cell vesicle trafficking machinery during L.pneumophila infection. Binds with high specificity to phosphatidylinositol 3-phosphate (PtdIns(3)P), (with a dissociation constant value of 809 nM), which guides SetA to the cytosolic leaflet of the early phagosome of the host cell. This Legionella pneumophila subsp. pneumophila (strain Philadelphia 1 / ATCC 33152 / DSM 7513) protein is Subversion of eukaryotic traffic protein A (setA).